Reading from the N-terminus, the 279-residue chain is Phosphate-binding protein PstS (279 aa).

The first 18 residues, 1-18 (MKKVIILIFMLSTSLLYN), serve as a signal peptide directing secretion. A lipid anchor (N-palmitoyl cysteine) is attached at cysteine 19. Cysteine 19 carries S-diacylglycerol cysteine lipidation. Phosphate is bound by residues 33–35 (STT), serine 63, and 151–153 (SGS).

Belongs to the PstS family. Monomer (in vitro). The complex is composed of two ATP-binding proteins (PstB), two transmembrane proteins (PstC and PstA) and a solute-binding protein (PstS).

Its subcellular location is the cell membrane. Its function is as follows. Binds inorganic phosphate with a Kd of 1.2 uM. Part of the ABC transporter complex PstSACB involved in phosphate import. The chain is Phosphate-binding protein PstS from Borreliella burgdorferi (strain ATCC 35210 / DSM 4680 / CIP 102532 / B31) (Borrelia burgdorferi).